We begin with the raw amino-acid sequence, 691 residues long: Elongation factor G (691 aa).

Residues 8–282 form the tr-type G domain; the sequence is EKTRNIGIMA…AVVDYLPSPV (275 aa). GTP is bound by residues 17-24, 81-85, and 135-138; these read AHIDAGKT, DTPGH, and NKMD.

Belongs to the TRAFAC class translation factor GTPase superfamily. Classic translation factor GTPase family. EF-G/EF-2 subfamily.

The protein localises to the cytoplasm. Its function is as follows. Catalyzes the GTP-dependent ribosomal translocation step during translation elongation. During this step, the ribosome changes from the pre-translocational (PRE) to the post-translocational (POST) state as the newly formed A-site-bound peptidyl-tRNA and P-site-bound deacylated tRNA move to the P and E sites, respectively. Catalyzes the coordinated movement of the two tRNA molecules, the mRNA and conformational changes in the ribosome. This Caldicellulosiruptor bescii (strain ATCC BAA-1888 / DSM 6725 / KCTC 15123 / Z-1320) (Anaerocellum thermophilum) protein is Elongation factor G.